The chain runs to 222 residues: Probable transcriptional regulator ycf29 (222 aa).

One can recognise a Response regulatory domain in the interval 4-120 (KLMLVENDIV…ELLSIINNLI (117 aa)). Asp-53 carries the post-translational modification 4-aspartylphosphate. One can recognise an HTH luxR-type domain in the interval 139 to 204 (QLNHKIRLTP…LLVKYSINNN (66 aa)). The segment at residues 163–182 (NKEISTILNTSVRNVEKYVS) is a DNA-binding region (H-T-H motif).

It is found in the plastid. The protein localises to the chloroplast. The sequence is that of Probable transcriptional regulator ycf29 (ycf29) from Pyropia yezoensis (Susabi-nori).